Consider the following 156-residue polypeptide: ATP synthase subunit b (156 aa).

A helical membrane pass occupies residues Val12–Ala32.

The protein belongs to the ATPase B chain family. F-type ATPases have 2 components, F(1) - the catalytic core - and F(0) - the membrane proton channel. F(1) has five subunits: alpha(3), beta(3), gamma(1), delta(1), epsilon(1). F(0) has three main subunits: a(1), b(2) and c(10-14). The alpha and beta chains form an alternating ring which encloses part of the gamma chain. F(1) is attached to F(0) by a central stalk formed by the gamma and epsilon chains, while a peripheral stalk is formed by the delta and b chains.

Its subcellular location is the cell inner membrane. In terms of biological role, f(1)F(0) ATP synthase produces ATP from ADP in the presence of a proton or sodium gradient. F-type ATPases consist of two structural domains, F(1) containing the extramembraneous catalytic core and F(0) containing the membrane proton channel, linked together by a central stalk and a peripheral stalk. During catalysis, ATP synthesis in the catalytic domain of F(1) is coupled via a rotary mechanism of the central stalk subunits to proton translocation. Its function is as follows. Component of the F(0) channel, it forms part of the peripheral stalk, linking F(1) to F(0). This is ATP synthase subunit b from Pseudomonas fluorescens (strain ATCC BAA-477 / NRRL B-23932 / Pf-5).